Consider the following 506-residue polypeptide: bZIP transcription factor TGA10 (506 aa).

2 disordered regions span residues 22 to 50 and 113 to 218; these read VSYM…HQHH and PSSI…KTLR. 4 stretches are compositionally biased toward polar residues: residues 25 to 45, 113 to 124, 142 to 152, and 160 to 180; these read MDSS…SFGG, PSSIQEQRQNSG, PSTTNKMNTGL, and SKRS…NDAP. Basic and acidic residues predominate over residues 207-216; it reads DAPKTPDPKT. Residues 213 to 257 enclose the bZIP domain; that stretch reads DPKTLRRLAQNREAARKSRLRKKAYVQQLESSRIRLTQLEQELQR. Residues 215–235 are basic motif; that stretch reads KTLRRLAQNREAARKSRLRKK. The Nuclear localization signal motif lies at 217-224; the sequence is LRRLAQNR. The interval 241 to 255 is leucine-zipper; it reads LESSRIRLTQLEQEL. One can recognise a DOG1 domain in the interval 288–502; the sequence is AAVFDMEYAR…RALSSLWHAR (215 aa).

The protein belongs to the bZIP family. Binds DNA as a dimer. Interacts with TGA2.2. Specifically expressed in roots.

Its subcellular location is the nucleus. Functionally, transcription activator that binds to as1-like elements (5'-TGACGTAAgggaTGACGCA-3') in promoters of target genes. Regulates transcription in response to plant signaling molecules salicylic acid (SA), methyl jasmonate (MJ) and auxin (2,4D) only in leaves. Prevents lateral branching and may repress defense signaling. The protein is bZIP transcription factor TGA10 of Nicotiana tabacum (Common tobacco).